The sequence spans 284 residues: 4-hydroxybenzoate octaprenyltransferase (284 aa).

A run of 8 helical transmembrane segments spans residues 14 to 34 (VHQP…LWIT), 41 to 61 (FIVL…GCVI), 93 to 113 (WVFF…NNII), 134 to 154 (YIYL…LIVY), 166 to 186 (WLLF…YAMV), 209 to 229 (IVIG…GIVE), 233 to 253 (IIFY…QQVL), and 262 to 282 (CLWA…GIVL).

Belongs to the UbiA prenyltransferase family. It depends on Mg(2+) as a cofactor.

It localises to the cell inner membrane. The enzyme catalyses all-trans-octaprenyl diphosphate + 4-hydroxybenzoate = 4-hydroxy-3-(all-trans-octaprenyl)benzoate + diphosphate. It functions in the pathway cofactor biosynthesis; ubiquinone biosynthesis. Functionally, catalyzes the prenylation of para-hydroxybenzoate (PHB) with an all-trans polyprenyl group. Mediates the second step in the final reaction sequence of ubiquinone-8 (UQ-8) biosynthesis, which is the condensation of the polyisoprenoid side chain with PHB, generating the first membrane-bound Q intermediate 3-octaprenyl-4-hydroxybenzoate. The chain is 4-hydroxybenzoate octaprenyltransferase from Blochmanniella floridana.